Here is a 426-residue protein sequence, read N- to C-terminus: Dihydroorotase (426 aa).

Residues His58 and His60 each contribute to the Zn(2+) site. Substrate-binding positions include 60–62 (HLR) and Asn92. Residues Asp150, His177, and His230 each coordinate Zn(2+). Position 276 (Asn276) interacts with substrate. Zn(2+) is bound at residue Asp303. Residue Asp303 is part of the active site. Substrate-binding positions include His307 and 321–322 (FG).

The protein belongs to the metallo-dependent hydrolases superfamily. DHOase family. Class I DHOase subfamily. It depends on Zn(2+) as a cofactor.

It carries out the reaction (S)-dihydroorotate + H2O = N-carbamoyl-L-aspartate + H(+). The protein operates within pyrimidine metabolism; UMP biosynthesis via de novo pathway; (S)-dihydroorotate from bicarbonate: step 3/3. In terms of biological role, catalyzes the reversible cyclization of carbamoyl aspartate to dihydroorotate. The protein is Dihydroorotase of Listeria monocytogenes serotype 4b (strain CLIP80459).